We begin with the raw amino-acid sequence, 663 residues long: Alcohol oxidase (663 aa).

FAD is bound at residue 8-39 (DVIVCGGGSTGCVIAGRLANVDENLKVLLIEN). The active-site Proton acceptor is the His-567. Positions 661–663 (ARY) match the Microbody targeting signal motif.

This sequence belongs to the GMC oxidoreductase family. Homooctamer. FAD serves as cofactor.

Its subcellular location is the peroxisome matrix. The catalysed reaction is a primary alcohol + O2 = an aldehyde + H2O2. Its pathway is energy metabolism; methane degradation. Catalyzes the oxidation of methanol to formaldehyde and hydrogen peroxide, the first step in the methanol utilization pathway of methylotrophic yeasts. The polypeptide is Alcohol oxidase (AOD1) (Candida boidinii (Yeast)).